Here is a 122-residue protein sequence, read N- to C-terminus: Large ribosomal subunit protein uL14 (122 aa).

This sequence belongs to the universal ribosomal protein uL14 family. Part of the 50S ribosomal subunit. Forms a cluster with proteins L3 and L19. In the 70S ribosome, L14 and L19 interact and together make contacts with the 16S rRNA in bridges B5 and B8.

In terms of biological role, binds to 23S rRNA. Forms part of two intersubunit bridges in the 70S ribosome. The polypeptide is Large ribosomal subunit protein uL14 (Borreliella burgdorferi (strain ATCC 35210 / DSM 4680 / CIP 102532 / B31) (Borrelia burgdorferi)).